A 213-amino-acid chain; its full sequence is tRNA (guanine-N(7)-)-methyltransferase (213 aa).

4 residues coordinate S-adenosyl-L-methionine: E44, E69, D96, and D118. D118 is an active-site residue. Substrate-binding positions include K122, D154, and 191–194 (TEYE).

The protein belongs to the class I-like SAM-binding methyltransferase superfamily. TrmB family.

It carries out the reaction guanosine(46) in tRNA + S-adenosyl-L-methionine = N(7)-methylguanosine(46) in tRNA + S-adenosyl-L-homocysteine. The protein operates within tRNA modification; N(7)-methylguanine-tRNA biosynthesis. Catalyzes the formation of N(7)-methylguanine at position 46 (m7G46) in tRNA. This chain is tRNA (guanine-N(7)-)-methyltransferase, found in Exiguobacterium sibiricum (strain DSM 17290 / CCUG 55495 / CIP 109462 / JCM 13490 / 255-15).